A 394-amino-acid chain; its full sequence is Succinate--CoA ligase [ADP-forming] subunit beta (394 aa).

Residues K46, 53–55, E99, C102, and E107 each bind ATP; that span reads GRG. Mg(2+) contacts are provided by N199 and D213. Residues N264 and 321–323 each bind substrate; that span reads GIV.

The protein belongs to the succinate/malate CoA ligase beta subunit family. As to quaternary structure, heterotetramer of two alpha and two beta subunits. Requires Mg(2+) as cofactor.

The enzyme catalyses succinate + ATP + CoA = succinyl-CoA + ADP + phosphate. It carries out the reaction GTP + succinate + CoA = succinyl-CoA + GDP + phosphate. It functions in the pathway carbohydrate metabolism; tricarboxylic acid cycle; succinate from succinyl-CoA (ligase route): step 1/1. Its function is as follows. Succinyl-CoA synthetase functions in the citric acid cycle (TCA), coupling the hydrolysis of succinyl-CoA to the synthesis of either ATP or GTP and thus represents the only step of substrate-level phosphorylation in the TCA. The beta subunit provides nucleotide specificity of the enzyme and binds the substrate succinate, while the binding sites for coenzyme A and phosphate are found in the alpha subunit. This is Succinate--CoA ligase [ADP-forming] subunit beta from Haemophilus influenzae (strain PittGG).